Here is a 150-residue protein sequence, read N- to C-terminus: Cytochrome c oxidase subunit 5A, mitochondrial (150 aa).

The transit peptide at M1–Y41 directs the protein to the mitochondrion. An SIFI-degron motif is present at residues L2–A17. 2 positions are modified to N6-acetyllysine: K87 and K113. The residue at position 141 (T141) is a Phosphothreonine.

It belongs to the cytochrome c oxidase subunit 5A family. Component of the cytochrome c oxidase (complex IV, CIV), a multisubunit enzyme composed of 14 subunits. The complex is composed of a catalytic core of 3 subunits MT-CO1, MT-CO2 and MT-CO3, encoded in the mitochondrial DNA, and 11 supernumerary subunits COX4I, COX5A, COX5B, COX6A, COX6B, COX6C, COX7A, COX7B, COX7C, COX8 and NDUFA4, which are encoded in the nuclear genome. The complex exists as a monomer or a dimer and forms supercomplexes (SCs) in the inner mitochondrial membrane with NADH-ubiquinone oxidoreductase (complex I, CI) and ubiquinol-cytochrome c oxidoreductase (cytochrome b-c1 complex, complex III, CIII), resulting in different assemblies (supercomplex SCI(1)III(2)IV(1) and megacomplex MCI(2)III(2)IV(2)). Interacts with AFG1L. Interacts with RAB5IF. In terms of processing, in response to mitochondrial stress, the precursor protein is ubiquitinated by the SIFI complex in the cytoplasm before mitochondrial import, leading to its degradation. Within the SIFI complex, UBR4 initiates ubiquitin chain that are further elongated or branched by KCMF1.

It localises to the mitochondrion inner membrane. It participates in energy metabolism; oxidative phosphorylation. Its function is as follows. Component of the cytochrome c oxidase, the last enzyme in the mitochondrial electron transport chain which drives oxidative phosphorylation. The respiratory chain contains 3 multisubunit complexes succinate dehydrogenase (complex II, CII), ubiquinol-cytochrome c oxidoreductase (cytochrome b-c1 complex, complex III, CIII) and cytochrome c oxidase (complex IV, CIV), that cooperate to transfer electrons derived from NADH and succinate to molecular oxygen, creating an electrochemical gradient over the inner membrane that drives transmembrane transport and the ATP synthase. Cytochrome c oxidase is the component of the respiratory chain that catalyzes the reduction of oxygen to water. Electrons originating from reduced cytochrome c in the intermembrane space (IMS) are transferred via the dinuclear copper A center (CU(A)) of subunit 2 and heme A of subunit 1 to the active site in subunit 1, a binuclear center (BNC) formed by heme A3 and copper B (CU(B)). The BNC reduces molecular oxygen to 2 water molecules using 4 electrons from cytochrome c in the IMS and 4 protons from the mitochondrial matrix. This is Cytochrome c oxidase subunit 5A, mitochondrial (COX5A) from Pan troglodytes (Chimpanzee).